The primary structure comprises 402 residues: MPLNLNCYLLNLKIDGVMKKYPEDFIVEEITPEGIVLEAGKDIGFKEENKHDWNGSFIHFTMEKINWNTMDAIRELARRTKTKRKNFGFAGTKDKFALTTQRVGCFGIKPEKLEEIKNSIKDITIRDIQKTNIKLRMGHLWGNKFTIKIRLNETDKYYNDISKYEEILKNKNLDYILNYYGTQRFGTFRPITHIVGKFIYNRDFESAFYTYCGAPINETGVVKEAREMVDNGEFEKALKLFPKKSYYNEIKMIRHYIKTGNYKECFKVLPPQLSSMFVNAYQSYLFNEMINIRHRDYSFDILDGDVVEEGAPTGNILGSDTILSDGIQGDIEKYIIEKENLDLKKFKIEDYGNFPGTRRKLITKIYDFESSIDKDNNIISISFKMERGNYATVVLREIISEI.

Asp94 functions as the Nucleophile in the catalytic mechanism. Residues 175–364 form the TRUD domain; that stretch reads YILNYYGTQR…PGTRRKLITK (190 aa).

The protein belongs to the pseudouridine synthase TruD family.

It carries out the reaction uridine(13) in tRNA = pseudouridine(13) in tRNA. Could be responsible for synthesis of pseudouridine from uracil-13 in transfer RNAs. This is Probable tRNA pseudouridine synthase D from Methanococcus aeolicus (strain ATCC BAA-1280 / DSM 17508 / OCM 812 / Nankai-3).